The primary structure comprises 938 residues: Isoleucine--tRNA ligase (938 aa).

The 'HIGH' region motif lies at 58 to 68; sequence PYANGSIHIGH. At lysine 183 the chain carries N6-acetyllysine. Glutamate 561 is a binding site for L-isoleucyl-5'-AMP. The short motif at 602-606 is the 'KMSKS' region element; the sequence is KMSKS. Lysine 605 provides a ligand contact to ATP. Zn(2+)-binding residues include cysteine 901, cysteine 904, cysteine 921, and cysteine 924.

Belongs to the class-I aminoacyl-tRNA synthetase family. IleS type 1 subfamily. In terms of assembly, monomer. The cofactor is Zn(2+).

The protein resides in the cytoplasm. It carries out the reaction tRNA(Ile) + L-isoleucine + ATP = L-isoleucyl-tRNA(Ile) + AMP + diphosphate. Catalyzes the attachment of isoleucine to tRNA(Ile). As IleRS can inadvertently accommodate and process structurally similar amino acids such as valine, to avoid such errors it has two additional distinct tRNA(Ile)-dependent editing activities. One activity is designated as 'pretransfer' editing and involves the hydrolysis of activated Val-AMP. The other activity is designated 'posttransfer' editing and involves deacylation of mischarged Val-tRNA(Ile). In Escherichia coli O9:H4 (strain HS), this protein is Isoleucine--tRNA ligase.